Here is a 170-residue protein sequence, read N- to C-terminus: Peptidyl-prolyl cis-trans isomerase-like 3 (170 aa).

The PPIase cyclophilin-type domain occupies 1–160; that stretch reads MSVTLHTDLG…QEFRIKSVTI (160 aa).

This sequence belongs to the cyclophilin-type PPIase family. PPIL3 subfamily.

It carries out the reaction [protein]-peptidylproline (omega=180) = [protein]-peptidylproline (omega=0). Functionally, PPIases accelerate the folding of proteins. It catalyzes the cis-trans isomerization of proline imidic peptide bonds in oligopeptides. This Rhizopus delemar (strain RA 99-880 / ATCC MYA-4621 / FGSC 9543 / NRRL 43880) (Mucormycosis agent) protein is Peptidyl-prolyl cis-trans isomerase-like 3 (cyp4).